The sequence spans 328 residues: dTDP-glucose 4,6-dehydratase (328 aa).

Residues 13 to 14 (FI), 37 to 40 (DALT), 63 to 64 (DI), 82 to 86 (LAAES), and threonine 101 contribute to the NAD(+) site. Serine 86 provides a ligand contact to substrate. A substrate-binding site is contributed by threonine 126. Catalysis depends on aspartate 127, which acts as the Proton donor. Residues glutamate 128 and tyrosine 150 each act as proton acceptor in the active site. 150 to 154 (YSASK) contacts NAD(+). Residue asparagine 179 coordinates substrate. Asparagine 180 is an NAD(+) binding site. Substrate is bound by residues 189-190 (KL), 205-207 (PLY), arginine 214, asparagine 249, and 272-276 (DRKGH).

It belongs to the NAD(P)-dependent epimerase/dehydratase family. dTDP-glucose dehydratase subfamily. In terms of assembly, homodimer. It depends on NAD(+) as a cofactor.

The catalysed reaction is dTDP-alpha-D-glucose = dTDP-4-dehydro-6-deoxy-alpha-D-glucose + H2O. It participates in antibiotic biosynthesis; streptomycin biosynthesis. In terms of biological role, involved in the biosynthesis of the streptose moiety of streptomycin. Catalyzes the dehydration of dTDP-D-glucose to form dTDP-6-deoxy-D-xylo-4-hexulose via a three-step process involving oxidation, dehydration and reduction. The polypeptide is dTDP-glucose 4,6-dehydratase (Streptomyces griseus).